Consider the following 313-residue polypeptide: Formimidoylglutamase (313 aa).

Residues histidine 130, aspartate 155, histidine 157, aspartate 159, aspartate 241, and aspartate 243 each contribute to the Mn(2+) site.

The protein belongs to the arginase family. Mn(2+) is required as a cofactor.

The enzyme catalyses N-formimidoyl-L-glutamate + H2O = formamide + L-glutamate. Its pathway is amino-acid degradation; L-histidine degradation into L-glutamate; L-glutamate from N-formimidoyl-L-glutamate (hydrolase route): step 1/1. Functionally, catalyzes the conversion of N-formimidoyl-L-glutamate to L-glutamate and formamide. The protein is Formimidoylglutamase of Salmonella heidelberg (strain SL476).